Here is a 141-residue protein sequence, read N- to C-terminus: Flagellar assembly factor FliW (141 aa).

It belongs to the FliW family. In terms of assembly, interacts with translational regulator CsrA and flagellin(s).

It localises to the cytoplasm. Acts as an anti-CsrA protein, binds CsrA and prevents it from repressing translation of its target genes, one of which is flagellin. Binds to flagellin and participates in the assembly of the flagellum. This is Flagellar assembly factor FliW from Clostridium beijerinckii (strain ATCC 51743 / NCIMB 8052) (Clostridium acetobutylicum).